A 109-amino-acid chain; its full sequence is Iron-sulfur cluster assembly protein CyaY (109 aa).

It belongs to the frataxin family.

Its function is as follows. Involved in iron-sulfur (Fe-S) cluster assembly. May act as a regulator of Fe-S biogenesis. The polypeptide is Iron-sulfur cluster assembly protein CyaY (Albidiferax ferrireducens (strain ATCC BAA-621 / DSM 15236 / T118) (Rhodoferax ferrireducens)).